A 128-amino-acid chain; its full sequence is Large-conductance mechanosensitive channel (128 aa).

A run of 2 helical transmembrane segments spans residues 10-30 (FAMR…SAFG) and 76-96 (GLFI…FMMI).

This sequence belongs to the MscL family. Homopentamer.

Its subcellular location is the cell inner membrane. Functionally, channel that opens in response to stretch forces in the membrane lipid bilayer. May participate in the regulation of osmotic pressure changes within the cell. This chain is Large-conductance mechanosensitive channel, found in Haemophilus influenzae (strain PittEE).